We begin with the raw amino-acid sequence, 266 residues long: 4-hydroxy-tetrahydrodipicolinate reductase (266 aa).

NAD(+)-binding positions include Gly-8–Met-13 and Glu-33. Arg-34 contributes to the NADP(+) binding site. Residues Gly-97 to Thr-99 and Ala-121 to Met-124 each bind NAD(+). His-154 acts as the Proton donor/acceptor in catalysis. His-155 provides a ligand contact to (S)-2,3,4,5-tetrahydrodipicolinate. Catalysis depends on Lys-158, which acts as the Proton donor. A (S)-2,3,4,5-tetrahydrodipicolinate-binding site is contributed by Gly-164–Thr-165.

Belongs to the DapB family.

Its subcellular location is the cytoplasm. The enzyme catalyses (S)-2,3,4,5-tetrahydrodipicolinate + NAD(+) + H2O = (2S,4S)-4-hydroxy-2,3,4,5-tetrahydrodipicolinate + NADH + H(+). The catalysed reaction is (S)-2,3,4,5-tetrahydrodipicolinate + NADP(+) + H2O = (2S,4S)-4-hydroxy-2,3,4,5-tetrahydrodipicolinate + NADPH + H(+). It functions in the pathway amino-acid biosynthesis; L-lysine biosynthesis via DAP pathway; (S)-tetrahydrodipicolinate from L-aspartate: step 4/4. Catalyzes the conversion of 4-hydroxy-tetrahydrodipicolinate (HTPA) to tetrahydrodipicolinate. In Geobacter metallireducens (strain ATCC 53774 / DSM 7210 / GS-15), this protein is 4-hydroxy-tetrahydrodipicolinate reductase.